The chain runs to 714 residues: Probable serine/threonine-protein kinase At1g09600 (714 aa).

Positions 1–64 (MGCNCTKGTR…NVGFEERSND (64 aa)) are disordered. The N-myristoyl glycine moiety is linked to residue Gly-2. The span at 16–27 (VDNSNSIVSNVN) shows a compositional bias: low complexity. A compositionally biased stretch (basic residues) spans 31–46 (RRSKPKKTPKKKKKSK). The 285-residue stretch at 163 to 447 (FEKLEKIGQG…TASALESEFF (285 aa)) folds into the Protein kinase domain. Residues 169 to 177 (IGQGTYSSV) and Lys-192 contribute to the ATP site. Asp-287 (proton acceptor) is an active-site residue. Positions 471–498 (KAQEEEAKRKKDTSSKQNDSKQVSRESK) are enriched in basic and acidic residues. Disordered stretches follow at residues 471–579 (KAQE…RKEL) and 693–714 (VDKK…ANGR). Composition is skewed to polar residues over residues 506–528 (NAES…NSDK) and 556–573 (GVSS…GSSR).

It belongs to the protein kinase superfamily. Ser/Thr protein kinase family.

This Arabidopsis thaliana (Mouse-ear cress) protein is Probable serine/threonine-protein kinase At1g09600.